The sequence spans 183 residues: Threonylcarbamoyl-AMP synthase (183 aa).

Positions 1-183 (MNIQQIVEQL…LFTHQLFRQG (183 aa)) constitute a YrdC-like domain.

This sequence belongs to the SUA5 family. TsaC subfamily.

The protein localises to the cytoplasm. It carries out the reaction L-threonine + hydrogencarbonate + ATP = L-threonylcarbamoyladenylate + diphosphate + H2O. Required for the formation of a threonylcarbamoyl group on adenosine at position 37 (t(6)A37) in tRNAs that read codons beginning with adenine. Catalyzes the conversion of L-threonine, HCO(3)(-)/CO(2) and ATP to give threonylcarbamoyl-AMP (TC-AMP) as the acyladenylate intermediate, with the release of diphosphate. The chain is Threonylcarbamoyl-AMP synthase from Pasteurella multocida (strain Pm70).